We begin with the raw amino-acid sequence, 389 residues long: E3 ubiquitin-protein ligase E3D (389 aa).

N-acetylalanine is present on Ala2. Positions 129–159 match the BRAT1-like motif motif; sequence PLPSENWGALVGEWCCHPDPFANKSLHPQEN. Residue Cys144 coordinates Zn(2+). Positions 235 to 257 are interaction with UBE2C; that stretch reads QSSERSFPIIPRSWFVQSVIAQC. An HECT-like region spans residues 353-389; sequence LPSATCLELLLILSKSNANLPSSLRRVNSFQVAFLKM.

As to quaternary structure, interacts with UBE2C/UbcH10 (E2 ubiquitin-conjugating enzyme). In vitro, interacts with cyclin-B. In terms of processing, ubiquitinated by UBCH10 (E2 ubiquitin-conjugating enzyme).

It is found in the cytoplasm. The catalysed reaction is S-ubiquitinyl-[E2 ubiquitin-conjugating enzyme]-L-cysteine + [acceptor protein]-L-lysine = [E2 ubiquitin-conjugating enzyme]-L-cysteine + N(6)-ubiquitinyl-[acceptor protein]-L-lysine.. It participates in protein modification; protein ubiquitination. Its function is as follows. E3 ubiquitin-protein ligase which accepts ubiquitin from specific E2 ubiquitin-conjugating enzymes, and transfers it to substrates, generally promoting their degradation by the proteasome. Independently of its E3 ubiquitin-protein ligase activity, acts as an inhibitor of CPSF3 endonuclease activity by blocking CPSF3 active site. In Homo sapiens (Human), this protein is E3 ubiquitin-protein ligase E3D (UBE3D).